We begin with the raw amino-acid sequence, 456 residues long: Enolase (456 aa).

Gln-164 contacts (2R)-2-phosphoglycerate. The active-site Proton donor is Glu-207. The Mg(2+) site is built by Asp-244, Glu-287, and Asp-314. Positions 339, 368, 369, and 390 each coordinate (2R)-2-phosphoglycerate. The Proton acceptor role is filled by Lys-339.

This sequence belongs to the enolase family. As to quaternary structure, component of the RNA degradosome, a multiprotein complex involved in RNA processing and mRNA degradation. Mg(2+) is required as a cofactor.

It is found in the cytoplasm. Its subcellular location is the secreted. It localises to the cell surface. It carries out the reaction (2R)-2-phosphoglycerate = phosphoenolpyruvate + H2O. It functions in the pathway carbohydrate degradation; glycolysis; pyruvate from D-glyceraldehyde 3-phosphate: step 4/5. Its function is as follows. Catalyzes the reversible conversion of 2-phosphoglycerate (2-PG) into phosphoenolpyruvate (PEP). It is essential for the degradation of carbohydrates via glycolysis. This is Enolase from Francisella tularensis subsp. holarctica (strain LVS).